The chain runs to 317 residues: tRNA pseudouridine synthase B (317 aa).

D47 functions as the Nucleophile in the catalytic mechanism.

This sequence belongs to the pseudouridine synthase TruB family. Type 1 subfamily.

It catalyses the reaction uridine(55) in tRNA = pseudouridine(55) in tRNA. Functionally, responsible for synthesis of pseudouridine from uracil-55 in the psi GC loop of transfer RNAs. The chain is tRNA pseudouridine synthase B from Shewanella frigidimarina (strain NCIMB 400).